A 150-amino-acid polypeptide reads, in one-letter code: MESANASTSATTIDQLCKTFNLSMHTLQINCVFCKNALTTAEIYSYAYKHLKVLFRGGYPYAACACCLEFHGKINQYRHFDYAGYATTVEEETKQDILDVLIRCYLCHKPLCEVEKVKHILTKARFIKLNCTWKGRCLHCWTTCMEDMLP.

2 zinc fingers span residues 31–67 (CVFC…CACC) and 104–140 (CYLC…CLHC).

The protein belongs to the papillomaviridae E6 protein family. Forms homodimers. Interacts with ubiquitin-protein ligase UBE3A/E6-AP; this interaction stimulates UBE3A ubiquitin activity. Interacts with host TP53 and EP300; this interaction inhibits TP53 activity. Interacts with human zyxin.

The protein resides in the host cytoplasm. The protein localises to the host nucleus. Its function is as follows. Plays a major role in the induction and maintenance of cellular transformation. E6 associates with host UBE3A/E6-AP ubiquitin-protein ligase and modulates its activity. Sequesters tumor suppressor TP53 in the host cytoplasm and modulates its activity by interacting with host EP300 that results in the reduction of TP53 acetylation and activation. In turn, apoptosis induced by DNA damage is inhibited. E6 also protects host keratinocytes from apoptosis by mediating the degradation of host BAK1. May also inhibit host immune response. The protein is Protein E6 of Human papillomavirus type 6b.